We begin with the raw amino-acid sequence, 390 residues long: 5-hydroxytryptamine receptor 1B (390 aa).

A disordered region spans residues 1–21 (MEETGAQCAPPPPAGSQTGVS). At 1–46 (MEETGAQCAPPPPAGSQTGVSQVNLSAAPSHNCSTEGYVYQDSVAL) the chain is on the extracellular side. Asn24 and Asn32 each carry an N-linked (GlcNAc...) asparagine glycan. Residues 47–72 (PWKVLLVVLLALITLATTLSNAFVIA) traverse the membrane as a helical segment. Over 73–86 (TVYRTRKLHTPANY) the chain is Cytoplasmic. The helical transmembrane segment at 87-111 (LIASLAVTDLLVSILVMPISTMYVV) threads the bilayer. Over 112–119 (TGRWTLGQ) the chain is Extracellular. A helical membrane pass occupies residues 120–145 (VVCDFWLSSDITCCTASILHLCVIAL). Cysteines 122 and 199 form a disulfide. Ergotamine-binding residues include Asp129 and Thr134. Residues 146-148 (DRY) carry the DRY motif; important for ligand-induced conformation changes and signaling motif. The Cytoplasmic portion of the chain corresponds to 146-165 (DRYWAITDAVEYSAKRTPKR). The chain crosses the membrane as a helical span at residues 166 to 184 (AAVMIALVWVFSISISLPP). Residues 185–205 (FFWRQAKAEEEVLDCLVNTDH) are Extracellular-facing. Val201 is a binding site for ergotamine. A helical membrane pass occupies residues 206-229 (ILYTVYSTVGAFYFPTLLLIALYS). At 230–315 (RIYVEARSRI…AARERKATKT (86 aa)) the chain is on the cytoplasmic side. A disordered region spans residues 251-282 (LTRAQLMTDSPGSTSSVTSINSRAPDVPSESG). A compositionally biased stretch (polar residues) spans 255 to 272 (QLMTDSPGSTSSVTSINS). The helical transmembrane segment at 316–337 (LGIILGAFIVCWLPFFIISLVM) threads the bilayer. The Extracellular portion of the chain corresponds to 338 to 347 (PICKDACWFH). A helical transmembrane segment spans residues 348-370 (LAIFDFFTWLGYLNSLINPIIYT). The NPxxY motif; important for ligand-induced conformation changes and signaling motif lies at 365–369 (NPIIY). Residues 371 to 390 (MSNEDFKQAFHKLIRFKCAS) are Cytoplasmic-facing. The S-palmitoyl cysteine moiety is linked to residue Cys388.

It belongs to the G-protein coupled receptor 1 family. In terms of assembly, homodimer. Heterodimer with HTR1D. In terms of processing, phosphorylated. Desensitization of the receptor may be mediated by its phosphorylation. Palmitoylated.

The protein resides in the cell membrane. In terms of biological role, G-protein coupled receptor for 5-hydroxytryptamine (serotonin). Also functions as a receptor for ergot alkaloid derivatives, various anxiolytic and antidepressant drugs and other psychoactive substances, such as lysergic acid diethylamide (LSD). Ligand binding causes a conformation change that triggers signaling via guanine nucleotide-binding proteins (G proteins) and modulates the activity of downstream effectors, such as adenylate cyclase. HTR1B is coupled to G(i)/G(o) G alpha proteins and mediates inhibitory neurotransmission by inhibiting adenylate cyclase activity. Arrestin family members inhibit signaling via G proteins and mediate activation of alternative signaling pathways. Regulates the release of 5-hydroxytryptamine, dopamine and acetylcholine in the brain, and thereby affects neural activity, nociceptive processing, pain perception, mood and behavior. Besides, plays a role in vasoconstriction of cerebral arteries. This Equus caballus (Horse) protein is 5-hydroxytryptamine receptor 1B (HTR1B).